Consider the following 274-residue polypeptide: 2,3,4,5-tetrahydropyridine-2,6-dicarboxylate N-succinyltransferase (274 aa).

Substrate is bound by residues Arg-103 and Asp-140.

The protein belongs to the transferase hexapeptide repeat family. As to quaternary structure, homotrimer.

It is found in the cytoplasm. It carries out the reaction (S)-2,3,4,5-tetrahydrodipicolinate + succinyl-CoA + H2O = (S)-2-succinylamino-6-oxoheptanedioate + CoA. Its pathway is amino-acid biosynthesis; L-lysine biosynthesis via DAP pathway; LL-2,6-diaminopimelate from (S)-tetrahydrodipicolinate (succinylase route): step 1/3. This chain is 2,3,4,5-tetrahydropyridine-2,6-dicarboxylate N-succinyltransferase, found in Pasteurella multocida (strain Pm70).